The following is a 281-amino-acid chain: Sulfur carrier protein FdhD (281 aa).

Residue Cys127 is the Cysteine persulfide intermediate of the active site. A Mo-bis(molybdopterin guanine dinucleotide)-binding site is contributed by 264 to 269; that stretch reads FAREGR.

The protein belongs to the FdhD family.

Its subcellular location is the cytoplasm. Its function is as follows. Required for formate dehydrogenase (FDH) activity. Acts as a sulfur carrier protein that transfers sulfur from IscS to the molybdenum cofactor prior to its insertion into FDH. In Mannheimia succiniciproducens (strain KCTC 0769BP / MBEL55E), this protein is Sulfur carrier protein FdhD.